Reading from the N-terminus, the 322-residue chain is Putative MgpC-like protein MPN_367 (322 aa).

Low complexity predominate over residues 1–48 (MVGSGAAGSASSLQGNGSNSSGLKSLLRSAPVSVPPSSTSNQTLSLSN). Disordered regions lie at residues 1 to 59 (MVGS…AVVS) and 118 to 145 (DATS…EPAL). A compositionally biased stretch (polar residues) spans 120–134 (TSTNLPHAAGASQTG).

The protein belongs to the MgpC family.

The chain is Putative MgpC-like protein MPN_367 from Mycoplasma pneumoniae (strain ATCC 29342 / M129 / Subtype 1) (Mycoplasmoides pneumoniae).